The sequence spans 414 residues: Heterogeneous nuclear ribonucleoprotein F (414 aa).

Methionine 1 carries the N-acetylmethionine modification. Position 2 is an N-acetylmethionine; in Heterogeneous nuclear ribonucleoprotein F, N-terminally processed (methionine 2). The RRM 1 domain maps to 11–90 (FVVKLRGLPW…RYIEVFKSHR (80 aa)). Lysine 72 is covalently cross-linked (Glycyl lysine isopeptide (Lys-Gly) (interchain with G-Cter in SUMO)). The interval 81–86 (RYIEVF) is interaction with RNA. Residue lysine 87 forms a Glycyl lysine isopeptide (Lys-Gly) (interchain with G-Cter in SUMO2) linkage. Phosphoserine is present on residues serine 104 and serine 161. The RRM 2 domain occupies 111–188 (GFVRLRGLPF…RYIEVFKSSQ (78 aa)). Lysine 167 is covalently cross-linked (Glycyl lysine isopeptide (Lys-Gly) (interchain with G-Cter in SUMO2)). Residues 179–184 (RYIEVF) form an interaction with RNA region. Lysine 185 participates in a covalent cross-link: Glycyl lysine isopeptide (Lys-Gly) (interchain with G-Cter in SUMO2). A phosphoserine mark is found at serine 187, serine 193, and serine 195. Lysine 200 bears the N6-acetyllysine; alternate mark. Lysine 200 participates in a covalent cross-link: Glycyl lysine isopeptide (Lys-Gly) (interchain with G-Cter in SUMO2); alternate. Phosphothreonine is present on threonine 215. Lysine 224 carries the N6-acetyllysine; alternate modification. Lysine 224 is covalently cross-linked (Glycyl lysine isopeptide (Lys-Gly) (interchain with G-Cter in SUMO2); alternate). Serine 265 carries the post-translational modification Phosphoserine. The region spanning 289-366 (HCVHMRGLPY…IELFLNSTTG (78 aa)) is the RRM 3 domain. The interaction with RNA stretch occupies residues 355–360 (RYIELF).

Identified in the spliceosome C complex. Interacts with AGO1, AGO2, TBP and TXNL4/DIM1. Sumoylated.

The protein resides in the nucleus. Its subcellular location is the nucleoplasm. Its function is as follows. Component of the heterogeneous nuclear ribonucleoprotein (hnRNP) complexes which provide the substrate for the processing events that pre-mRNAs undergo before becoming functional, translatable mRNAs in the cytoplasm. Plays a role in the regulation of alternative splicing events. Binds G-rich sequences in pre-mRNAs and keeps target RNA in an unfolded state. The polypeptide is Heterogeneous nuclear ribonucleoprotein F (HNRNPF) (Bos taurus (Bovine)).